The primary structure comprises 269 residues: Ubiquinone/menaquinone biosynthesis C-methyltransferase UbiE (269 aa).

Residues Thr92, Asp113, and 141–142 (NA) each bind S-adenosyl-L-methionine.

It belongs to the class I-like SAM-binding methyltransferase superfamily. MenG/UbiE family.

It catalyses the reaction a 2-demethylmenaquinol + S-adenosyl-L-methionine = a menaquinol + S-adenosyl-L-homocysteine + H(+). It carries out the reaction a 2-methoxy-6-(all-trans-polyprenyl)benzene-1,4-diol + S-adenosyl-L-methionine = a 5-methoxy-2-methyl-3-(all-trans-polyprenyl)benzene-1,4-diol + S-adenosyl-L-homocysteine + H(+). The protein operates within quinol/quinone metabolism; menaquinone biosynthesis; menaquinol from 1,4-dihydroxy-2-naphthoate: step 2/2. Its pathway is cofactor biosynthesis; ubiquinone biosynthesis. Functionally, methyltransferase required for the conversion of demethylmenaquinol (DMKH2) to menaquinol (MKH2) and the conversion of 2-polyprenyl-6-methoxy-1,4-benzoquinol (DDMQH2) to 2-polyprenyl-3-methyl-6-methoxy-1,4-benzoquinol (DMQH2). The protein is Ubiquinone/menaquinone biosynthesis C-methyltransferase UbiE of Brucella canis (strain ATCC 23365 / NCTC 10854 / RM-666).